The primary structure comprises 178 residues: Germinal center-associated signaling and motility protein (178 aa).

At Ser99 the chain carries Phosphoserine. The residue at position 148 (Tyr148) is a Phosphotyrosine.

Interacts with ACTB and MYH2; the interaction with MYH2 is increased by IL6-induced phosphorylation. Interacts (via C-terminus) with ARHGEF11 (via DH domain). Interacts with ARHGEF12. Interacts with SYK; the interaction increases after B-cell receptor stimulation, resulting in enhanced SYK autophosphorylation and activity. Phosphorylation on tyrosine residues can be induced by IL6. Phosphorylation is mediated by LYN. In terms of processing, targeted by the ubiquitin E3 ligase subunit FBXO10 to mediate its ubiquitination and degradation. Expressed in diffuse large B-cell lymphoma (DLBCL) and several germinal center (GC)-like lymphoma cell lines (at protein level). Highly expressed in normal GC lymphocytes and GC-derived malignancies. Expressed in thymus and spleen.

Its subcellular location is the cytoplasm. It is found in the cell membrane. Functionally, involved in the negative regulation of lymphocyte motility. It mediates the migration-inhibitory effects of IL6. Serves as a positive regulator of the RhoA signaling pathway. Enhancement of RhoA activation results in inhibition of lymphocyte and lymphoma cell motility by activation of its downstream effector ROCK. Is a regulator of B-cell receptor signaling, that acts through SYK kinase activation. This Homo sapiens (Human) protein is Germinal center-associated signaling and motility protein (GCSAM).